A 301-amino-acid chain; its full sequence is Pyridoxal 5'-phosphate synthase subunit PdxS (301 aa).

Asp-31 provides a ligand contact to D-ribose 5-phosphate. Lys-88 (schiff-base intermediate with D-ribose 5-phosphate) is an active-site residue. Gly-160 is a D-ribose 5-phosphate binding site. Lys-172 serves as a coordination point for D-glyceraldehyde 3-phosphate. Residues Gly-221 and 242–243 contribute to the D-ribose 5-phosphate site; that span reads GS.

Belongs to the PdxS/SNZ family. In terms of assembly, in the presence of PdxT, forms a dodecamer of heterodimers.

It catalyses the reaction aldehydo-D-ribose 5-phosphate + D-glyceraldehyde 3-phosphate + L-glutamine = pyridoxal 5'-phosphate + L-glutamate + phosphate + 3 H2O + H(+). The protein operates within cofactor biosynthesis; pyridoxal 5'-phosphate biosynthesis. Its function is as follows. Catalyzes the formation of pyridoxal 5'-phosphate from ribose 5-phosphate (RBP), glyceraldehyde 3-phosphate (G3P) and ammonia. The ammonia is provided by the PdxT subunit. Can also use ribulose 5-phosphate and dihydroxyacetone phosphate as substrates, resulting from enzyme-catalyzed isomerization of RBP and G3P, respectively. In Methanosarcina mazei (strain ATCC BAA-159 / DSM 3647 / Goe1 / Go1 / JCM 11833 / OCM 88) (Methanosarcina frisia), this protein is Pyridoxal 5'-phosphate synthase subunit PdxS.